The sequence spans 259 residues: F-box/kelch-repeat protein At2g22050 (259 aa).

Residues 1–12 (MSPSSKKFKKQS) are compositionally biased toward basic residues. The segment at 1–29 (MSPSSKKFKKQSSSKSVKPPLEDNDPSLP) is disordered. Residues 28–76 (LPSFTSLPDEIVLDCLQRVPRSYYLNLCRVSKTLRSLVRSPELSRLRTL) form the F-box domain. The Kelch repeat unit spans residues 142–186 (EIYFVGGSFEPMSELWILDTRTGMFRQGPSMKVARTDEASVGVIN).

The sequence is that of F-box/kelch-repeat protein At2g22050 from Arabidopsis thaliana (Mouse-ear cress).